The chain runs to 133 residues: Large ribosomal subunit protein uL15 (133 aa).

A disordered region spans residues 1–58 (MALQNLTPAPGSTHATKRLGRGQGSGNGKTAGKGNKGQRARKGYNEKRGFEGGQQPLQ). Residues 21 to 35 (RGQGSGNGKTAGKGN) are compositionally biased toward gly residues.

Belongs to the universal ribosomal protein uL15 family. Part of the 50S ribosomal subunit.

In terms of biological role, binds to the 23S rRNA. This Campylobacter curvus (strain 525.92) protein is Large ribosomal subunit protein uL15.